Consider the following 110-residue polypeptide: ATP-dependent Clp protease adapter protein ClpS 2 (110 aa).

The tract at residues 1-24 (MSNDENRSGSPTGPNTSVITKVKP) is disordered. Residues 8–19 (SGSPTGPNTSVI) are compositionally biased toward polar residues.

This sequence belongs to the ClpS family. As to quaternary structure, binds to the N-terminal domain of the chaperone ClpA.

Its function is as follows. Involved in the modulation of the specificity of the ClpAP-mediated ATP-dependent protein degradation. This Bradyrhizobium diazoefficiens (strain JCM 10833 / BCRC 13528 / IAM 13628 / NBRC 14792 / USDA 110) protein is ATP-dependent Clp protease adapter protein ClpS 2.